The following is a 712-amino-acid chain: Glucans biosynthesis glucosyltransferase H (712 aa).

Helical transmembrane passes span 57–77 (LAIMLATAALTCAGGYEMYQV), 89–109 (IVLALFAALFAWVALSFVSAL), 408–428 (GIGSYITAPMWLAFLVAGILI), 462–482 (FAGTMGLLMMPKLLALILVVI), 552–572 (YAAPSWLGAVMAVSALLVSWP), and 573–593 (LLLWMMPVILGLVLAIPVALL).

This sequence belongs to the glycosyltransferase 2 family. OpgH subfamily.

Its subcellular location is the cell inner membrane. It participates in glycan metabolism; osmoregulated periplasmic glucan (OPG) biosynthesis. Involved in the biosynthesis of osmoregulated periplasmic glucans (OPGs). This chain is Glucans biosynthesis glucosyltransferase H, found in Rhodopseudomonas palustris (strain BisA53).